The chain runs to 431 residues: 5-methylthioadenosine/S-adenosylhomocysteine deaminase (431 aa).

Zn(2+) contacts are provided by histidine 68 and histidine 70. The substrate site is built by glutamate 97 and histidine 186. Histidine 213 contributes to the Zn(2+) binding site. 2 residues coordinate substrate: glutamate 216 and aspartate 301. Position 301 (aspartate 301) interacts with Zn(2+).

The protein belongs to the metallo-dependent hydrolases superfamily. MTA/SAH deaminase family. It depends on Zn(2+) as a cofactor.

The enzyme catalyses S-adenosyl-L-homocysteine + H2O + H(+) = S-inosyl-L-homocysteine + NH4(+). It carries out the reaction S-methyl-5'-thioadenosine + H2O + H(+) = S-methyl-5'-thioinosine + NH4(+). In terms of biological role, catalyzes the deamination of 5-methylthioadenosine and S-adenosyl-L-homocysteine into 5-methylthioinosine and S-inosyl-L-homocysteine, respectively. Is also able to deaminate adenosine. The sequence is that of 5-methylthioadenosine/S-adenosylhomocysteine deaminase from Halothermothrix orenii (strain H 168 / OCM 544 / DSM 9562).